A 423-amino-acid polypeptide reads, in one-letter code: Polyglutamylase complex subunit TTLL1 (423 aa).

Residues Met-1–Asn-367 enclose the TTL domain. Residues Lys-138, Gln-144 to Gly-145, Ser-181 to Ile-184, and Lys-194 to Asp-196 each bind ATP. Residue Gln-144 coordinates a protein. An L-glutamate-binding site is contributed by Arg-220. Residue Thr-241–Asn-242 participates in ATP binding. Lys-259 is an L-glutamate binding site. Mg(2+) is bound by residues Asp-313, Glu-326, and Asn-328. An L-glutamate-binding site is contributed by Lys-344. Residues Asp-390–Lys-423 form a disordered region.

It belongs to the tubulin polyglutamylase family. As to quaternary structure, part of the neuronal tubulin polyglutamylase complex which contains TPGS1, TPGS2, TTLL1, LRRC49 and NICN1. Interacts with PCM1, CSTPP1 and LRRC49. Requires Mg(2+) as cofactor. As to expression, highly expressed in brain, heart and kidney. Expressed in liver, lung, muscle, spleen, testis and trachea. In the brain, expressed in ependymal cilia, cortex, corpus callosum and striatum. Expressed in blastomere.

Its subcellular location is the cytoplasm. It is found in the cytoskeleton. The protein localises to the cilium basal body. The protein resides in the cilium axoneme. It localises to the cell projection. Its subcellular location is the cilium. It is found in the flagellum. The catalysed reaction is (L-glutamyl)(n)-gamma-L-glutamyl-L-glutamyl-[protein] + L-glutamate + ATP = (L-glutamyl)(n+1)-gamma-L-glutamyl-L-glutamyl-[protein] + ADP + phosphate + H(+). Catalytic subunit of a polyglutamylase complex which modifies tubulin, generating side chains of glutamate on the gamma-carboxyl group of specific glutamate residues within the C-terminal tail of tubulin. Probably involved in the side-chain elongation step of the polyglutamylation reaction rather than the initiation step. Modifies both alpha- and beta-tubulins with a preference for the alpha-tail. Unlike most polyglutamylases of the tubulin--tyrosine ligase family, only displays a catalytic activity when in complex with other proteins as it is most likely lacking domains important for autonomous activity. Part of the neuronal tubulin polyglutamylase complex. Mediates cilia and flagella polyglutamylation which is essential for their biogenesis and motility. Involved in respiratory motile cilia function through the regulation of beating asymmetry. Essential for sperm flagella biogenesis, motility and male fertility. Also mediates glutamylation of non-tubulin proteins. Involved in KLF4 glutamylation which impedes its ubiquitination, thereby leading to somatic cell reprogramming, pluripotency maintenance and embryogenesis. This is Polyglutamylase complex subunit TTLL1 from Mus musculus (Mouse).